The chain runs to 197 residues: MMFPQSRHSGSSHLPQQLKFTTSDSCDRIKDEFQLLQAQYHSLKLECDKLASEKSEMQRHYVMYYEMSYGLNIEMHKQAEIVKRLNGICAQVLPYLSQEHQQQVLGAIERAKQVTAPELNSIIRQQLQAHQLSQLQALALPLTPLPVGLQPPSLPAVSAGTGLLSLSALGSQTHLSKEDKNGHDGDTHQEDDGEKSD.

Residues 166 to 197 are CCN domain; sequence LSALGSQTHLSKEDKNGHDGDTHQEDDGEKSD. The disordered stretch occupies residues 170-197; it reads GSQTHLSKEDKNGHDGDTHQEDDGEKSD. A compositionally biased stretch (basic and acidic residues) spans 175 to 197; sequence LSKEDKNGHDGDTHQEDDGEKSD. At Ser196 the chain carries Phosphoserine.

This sequence belongs to the WD repeat Groucho/TLE family. Homooligomer and heterooligomer with other family members. Binds TCF7 and the NF-kappa-B subunit RELA. Interacts with PHF12. Interacts (via Q domain) with SIX3. Interacts with SIX6. Ubiquitinated by XIAP/BIRC4. As to expression, ubiquitously expressed in developing embryos by midgestation, a wide expression is conserved in adult. In mouse, abundantly expressed in muscle, heart and brain.

It is found in the nucleus. Functionally, transcriptional corepressor. Acts as a dominant repressor towards other family members. Inhibits NF-kappa-B-regulated gene expression. May be required for the initiation and maintenance of the differentiated state. Essential for the transcriptional repressor activity of SIX3 during retina and lens development. The protein is TLE family member 5 of Mus musculus (Mouse).